A 183-amino-acid chain; its full sequence is MLDKIIRIATRQSPLALWQAHYVQHLLQANHPGLQVELVPMVTRGDIILDTPLAKVGGKGLFVKELELALLDGRADIAVHSMKDVPVAFPEGLGLVTICEPDDPRDAFVSPHFAHIDDLPAGSIVGNSSLRRQCQLRERRPDLIIRDLRGNVGTRLAKLDNGDYHAIILAVAGLNRLGLASRI.

It belongs to the HMBS family. As to quaternary structure, monomer. The cofactor is dipyrromethane.

It carries out the reaction 4 porphobilinogen + H2O = hydroxymethylbilane + 4 NH4(+). It participates in porphyrin-containing compound metabolism; protoporphyrin-IX biosynthesis; coproporphyrinogen-III from 5-aminolevulinate: step 2/4. In terms of biological role, tetrapolymerization of the monopyrrole PBG into the hydroxymethylbilane pre-uroporphyrinogen in several discrete steps. The polypeptide is Porphobilinogen deaminase (hemC) (Yersinia intermedia).